The following is a 217-amino-acid chain: Thiopurine S-methyltransferase (217 aa).

The S-adenosyl-L-methionine site is built by tryptophan 11, leucine 46, glutamate 67, and arginine 122.

This sequence belongs to the class I-like SAM-binding methyltransferase superfamily. TPMT family.

It localises to the cytoplasm. It catalyses the reaction S-adenosyl-L-methionine + a thiopurine = S-adenosyl-L-homocysteine + a thiopurine S-methylether.. This is Thiopurine S-methyltransferase from Vibrio vulnificus (strain YJ016).